We begin with the raw amino-acid sequence, 149 residues long: Protein TraJ (149 aa).

It localises to the cell membrane. Its function is as follows. This protein is essential for positively regulating the expression of transfer genes that are involved in the conjugal transfer of DNA between bacterial cells. In Escherichia coli, this protein is Protein TraJ (traJ).